A 613-amino-acid chain; its full sequence is Phostensin (613 aa).

A compositionally biased stretch (basic and acidic residues) spans 18–33 (EEASVRGREKAERERL). Disordered stretches follow at residues 18-231 (EEAS…SAYQ) and 266-500 (GEER…AVPG). 5 positions are modified to phosphoserine: Ser-54, Ser-125, Ser-133, Ser-175, and Ser-195. 2 stretches are compositionally biased toward basic and acidic residues: residues 104-154 (RSEE…ERRL) and 167-191 (LEAR…EAWK). Thr-199 bears the Phosphothreonine mark. Over residues 199–221 (TPERSLRLAESREQSPRRKEVES) the composition is skewed to basic and acidic residues. Ser-224 is modified (phosphoserine). Over residues 266-282 (GEERQDYSEECGRKEEW) the composition is skewed to basic and acidic residues. Positions 295-309 (LSETLTREAQGNSSA) are enriched in polar residues. Composition is skewed to basic and acidic residues over residues 314–327 (AEQR…RGMK), 340–350 (KAREWTPRDIE), and 357–366 (EPPESAEKLL). Phosphoserine occurs at positions 368 and 432. The segment covering 424–446 (QPPPPAPLSPPPPAPTAPQPPGD) has biased composition (pro residues). Residue Lys-457 is modified to N6-acetyllysine. Residues 476–499 (PRRSVPPATPATPTSPATVDAAVP) are compositionally biased toward low complexity. Residues Ser-490 and Ser-530 each carry the phosphoserine modification. A disordered region spans residues 552–595 (QYPSESSVLEELGPEPEVPSAPNPPAAQPDDEEDEEELLLLQPE). The segment covering 567–578 (PEVPSAPNPPAA) has biased composition (pro residues). A compositionally biased stretch (acidic residues) spans 580-589 (PDDEEDEEEL).

In terms of assembly, interacts with Protein phosphatase 1 (PP1). In terms of tissue distribution, isoform 4 is predominantly expressed in leukocytes and spleen.

It is found in the cytoplasm. Its subcellular location is the cytoskeleton. In terms of biological role, may target protein phosphatase 1 to F-actin cytoskeleton. In Homo sapiens (Human), this protein is Phostensin (PPP1R18).